A 304-amino-acid chain; its full sequence is Acetaldehyde dehydrogenase 4 (304 aa).

Cysteine 131 serves as the catalytic Acyl-thioester intermediate. Residues 162 to 170 (SAGPGTRKN) and asparagine 273 contribute to the NAD(+) site.

The protein belongs to the acetaldehyde dehydrogenase family. In terms of assembly, heterotetramer composed of two BphI (aldolase) and two BphJ (dehydrogenase).

The enzyme catalyses acetaldehyde + NAD(+) + CoA = acetyl-CoA + NADH + H(+). The catalysed reaction is propanal + NAD(+) + CoA = propanoyl-CoA + NADH + H(+). It participates in xenobiotic degradation; polychlorinated biphenyl degradation. Its activity is regulated as follows. Bound pyruvate or other intermediates in the aldol addition reaction catalyzed by BphI allosterically activates BphJ reductive deacylation activity. Its function is as follows. Catalyzes the conversion of acetaldehyde or propanal to acetyl-CoA or propanoyl-CoA, respectively, using NAD(+) and coenzyme A. Displays broad specificity since it can utilize aliphatic aldehydes from two to five carbons in length as substrates; the aldehyde substrates can be directly channeled from the aldolase BphI to the dehydrogenase BphJ. Is the final enzyme in the meta-cleavage pathway for the degradation of polychlorinated biphenyls (PCBs). Is also able to utilize NADP(+) instead of NAD(+). Is not active with succinic semialdehyde or picolinaldehyde as substrates. Can also catalyze the reverse reaction, i.e. the reductive deacylation of acetyl-CoA to acetaldehyde, which is then channeled to the BphI active site. The BphI-BphJ enzyme complex exhibits unique bidirectionality in substrate channeling and allosteric activation. The polypeptide is Acetaldehyde dehydrogenase 4 (bphJ) (Paraburkholderia xenovorans (strain LB400)).